The following is a 132-amino-acid chain: U-scoloptoxin(11)-Sa1a (132 aa).

A signal peptide spans 1–19 (MIRFFAFVLFFATQELILC).

Belongs to the scoloptoxin-11 family. Post-translationally, contains 5 disulfide bonds. In terms of tissue distribution, expressed by the venom gland.

The protein resides in the secreted. The protein is U-scoloptoxin(11)-Sa1a of Scolopendra alternans (Florida Keys giant centipede).